The following is a 151-amino-acid chain: Small ribosomal subunit protein bS6 (151 aa).

Residues 97–151 (EAEPSAMMQKRDRDDRKDRDRGDRPRRRDDDFGGGDRGDRGDRGDRPERNFGGEN) form a disordered region. The segment covering 105-151 (QKRDRDDRKDRDRGDRPRRRDDDFGGGDRGDRGDRGDRPERNFGGEN) has biased composition (basic and acidic residues).

It belongs to the bacterial ribosomal protein bS6 family.

Its function is as follows. Binds together with bS18 to 16S ribosomal RNA. This Methylorubrum extorquens (strain CM4 / NCIMB 13688) (Methylobacterium extorquens) protein is Small ribosomal subunit protein bS6.